The sequence spans 338 residues: Glyceraldehyde-3-phosphate dehydrogenase 2 (338 aa).

NAD(+)-binding positions include 11–12, aspartate 33, and arginine 78; that span reads RI. Residues 149–151, threonine 180, 209–210, and arginine 232 each bind D-glyceraldehyde 3-phosphate; these read SCT and TG. Cysteine 150 serves as the catalytic Nucleophile. An NAD(+)-binding site is contributed by asparagine 314.

Belongs to the glyceraldehyde-3-phosphate dehydrogenase family. As to quaternary structure, homotetramer.

The protein localises to the cytoplasm. It catalyses the reaction D-glyceraldehyde 3-phosphate + phosphate + NAD(+) = (2R)-3-phospho-glyceroyl phosphate + NADH + H(+). It functions in the pathway carbohydrate degradation; glycolysis; pyruvate from D-glyceraldehyde 3-phosphate: step 1/5. The chain is Glyceraldehyde-3-phosphate dehydrogenase 2 (gpd2) from Agaricus bisporus (White button mushroom).